A 347-amino-acid polypeptide reads, in one-letter code: D-alanine--D-alanine ligase (347 aa).

In terms of domain architecture, ATP-grasp spans 131–333 (KRVLESAGIA…YPELIERLVD (203 aa)). Residue 161–216 (EEKLAYPVFAKPSNMGSSVGISKSENQEELRQALKLAFRYDSRVLVEQGVNAREIE) participates in ATP binding. Residues Asp-287, Glu-300, and Asn-302 each coordinate Mg(2+).

It belongs to the D-alanine--D-alanine ligase family. The cofactor is Mg(2+). It depends on Mn(2+) as a cofactor.

It is found in the cytoplasm. It catalyses the reaction 2 D-alanine + ATP = D-alanyl-D-alanine + ADP + phosphate + H(+). Its pathway is cell wall biogenesis; peptidoglycan biosynthesis. In terms of biological role, cell wall formation. The sequence is that of D-alanine--D-alanine ligase from Streptococcus pneumoniae (strain P1031).